The following is a 69-amino-acid chain: uncharacterized protein (69 aa).

In terms of assembly, interacts with the RNA polymerase core.

This is an uncharacterized protein from Bacillus subtilis (strain 168).